A 670-amino-acid polypeptide reads, in one-letter code: Penicillin-binding protein activator LpoA (670 aa).

The signal sequence occupies residues 1–26 (MLPSKVVHRKAVRTVPLLLAALIFAG). The N-palmitoyl cysteine moiety is linked to residue Cys-27. Residue Cys-27 is the site of S-diacylglycerol cysteine attachment.

This sequence belongs to the LpoA family. Interacts with PBP1a.

Its subcellular location is the cell outer membrane. Regulator of peptidoglycan synthesis that is essential for the function of penicillin-binding protein 1A (PBP1a). In Erwinia tasmaniensis (strain DSM 17950 / CFBP 7177 / CIP 109463 / NCPPB 4357 / Et1/99), this protein is Penicillin-binding protein activator LpoA.